We begin with the raw amino-acid sequence, 85 residues long: U4-theraphotoxin-Hhn1t (85 aa).

Positions 1 to 22 are cleaved as a signal peptide; sequence MKVTLIAILTCAAVLVLHTTAA. Positions 23–48 are excised as a propeptide; sequence EELEAESQLMEVGMPDTELAAVDEER. 3 disulfide bridges follow: cysteine 52–cysteine 66, cysteine 56–cysteine 77, and cysteine 71–cysteine 82.

The protein belongs to the neurotoxin 12 (Hwtx-2) family. 02 (Hwtx-2) subfamily. As to expression, expressed by the venom gland.

Its subcellular location is the secreted. Functionally, postsynaptic neurotoxin. The protein is U4-theraphotoxin-Hhn1t of Cyriopagopus hainanus (Chinese bird spider).